Consider the following 68-residue polypeptide: Large ribosomal subunit protein uL30 (68 aa).

This sequence belongs to the universal ribosomal protein uL30 family. As to quaternary structure, part of the 50S ribosomal subunit.

This is Large ribosomal subunit protein uL30 from Bartonella quintana (strain Toulouse) (Rochalimaea quintana).